The chain runs to 473 residues: mRNA export factor ICP27 homolog (473 aa).

Disordered stretches follow at residues 57–81 (QELL…NSIY) and 123–143 (QTKR…NFPM). 4 residues coordinate Zn(2+): cysteine 362, histidine 438, cysteine 442, and cysteine 447. A CHC2-type zinc finger spans residues 362-447 (CKYGTEKRSM…HTRRCSDPAC (86 aa)).

The protein belongs to the HHV-1 ICP27 protein family. Associates in a complex with RNA, and host export factors NXF1/TAP and ALYREF; these interactions allow nuclear export of viral transcripts.

The protein resides in the host cytoplasm. The protein localises to the host nucleus. In terms of biological role, multifunctional regulator of the expression of viral genes that mediates nuclear export of viral intronless mRNAs. This immediate early (EI) protein promotes the nuclear export of viral intronless mRNAs by interacting with mRNAs and host NXF1/TAP. The chain is mRNA export factor ICP27 homolog from Gallus gallus (Chicken).